A 116-amino-acid chain; its full sequence is NADH-ubiquinone oxidoreductase chain 3 (116 aa).

3 helical membrane passes run 3-23 (LILA…MIAF), 56-76 (FFLV…LLPL), and 85-105 (PTLA…GLIH).

This sequence belongs to the complex I subunit 3 family.

It is found in the mitochondrion membrane. It carries out the reaction a ubiquinone + NADH + 5 H(+)(in) = a ubiquinol + NAD(+) + 4 H(+)(out). Functionally, core subunit of the mitochondrial membrane respiratory chain NADH dehydrogenase (Complex I) that is believed to belong to the minimal assembly required for catalysis. Complex I functions in the transfer of electrons from NADH to the respiratory chain. The immediate electron acceptor for the enzyme is believed to be ubiquinone. The chain is NADH-ubiquinone oxidoreductase chain 3 (MT-ND3) from Latimeria chalumnae (Coelacanth).